We begin with the raw amino-acid sequence, 313 residues long: MDREKQQLSIEAARLYYQSDYSQQQIAEQLNISRPTVSRLLQYAKEKGYVQIRVMDPFEDLDALGSILEEKYGLLEAHVVFSPTPDYAGITHDLSRYGAEYMHETVKDGDIVGVSWGTTMYQIAQNMQPKQVKGVEVVQLKGGISHSRVNTYSAETIQLFAEAFQTMPRYLPLPVVFDNADVKRMVEKDRHIERIIEMGKQANIALFTVGTVRDEALLFRLGYFNEEEKALLKKQAVGDICSRFFDAKGNICSSAINDRTIGVELQDLRLKERSILVAGGSRKVSSIHGALTGKYANVLIIDQHTARALVNDL.

Positions 23-42 (QQQIAEQLNISRPTVSRLLQ) form a DNA-binding region, H-T-H motif.

Belongs to the SorC transcriptional regulatory family. In terms of assembly, homooctamer.

Functionally, negative regulator of the dra-nupC-pdp operon. DeoR binds cooperatively to the operator DNA, which consists of a palindrome and a direct repeat sequence located 3' to the palindrome. The sequence is that of Deoxyribonucleoside regulator from Bacillus subtilis (strain 168).